We begin with the raw amino-acid sequence, 167 residues long: SsrA-binding protein (167 aa).

A disordered region spans residues 144–167; sequence HDKRAADKEKQSKKEVRSAMAKYQ. The segment covering 146-160 has biased composition (basic and acidic residues); it reads KRAADKEKQSKKEVR.

The protein belongs to the SmpB family.

It localises to the cytoplasm. Required for rescue of stalled ribosomes mediated by trans-translation. Binds to transfer-messenger RNA (tmRNA), required for stable association of tmRNA with ribosomes. tmRNA and SmpB together mimic tRNA shape, replacing the anticodon stem-loop with SmpB. tmRNA is encoded by the ssrA gene; the 2 termini fold to resemble tRNA(Ala) and it encodes a 'tag peptide', a short internal open reading frame. During trans-translation Ala-aminoacylated tmRNA acts like a tRNA, entering the A-site of stalled ribosomes, displacing the stalled mRNA. The ribosome then switches to translate the ORF on the tmRNA; the nascent peptide is terminated with the 'tag peptide' encoded by the tmRNA and targeted for degradation. The ribosome is freed to recommence translation, which seems to be the essential function of trans-translation. The sequence is that of SsrA-binding protein from Synechococcus sp. (strain CC9902).